We begin with the raw amino-acid sequence, 235 residues long: LexA repressor (235 aa).

Positions 47–67 (IREIADAVGLTSTSSVAHQLR) form a DNA-binding region, H-T-H motif. Residues S159 and K196 each act as for autocatalytic cleavage activity in the active site.

The protein belongs to the peptidase S24 family. In terms of assembly, homodimer.

It carries out the reaction Hydrolysis of Ala-|-Gly bond in repressor LexA.. Its function is as follows. Represses a number of genes involved in the response to DNA damage (SOS response), including recA and lexA. In the presence of single-stranded DNA, RecA interacts with LexA causing an autocatalytic cleavage which disrupts the DNA-binding part of LexA, leading to derepression of the SOS regulon and eventually DNA repair. This chain is LexA repressor, found in Mycobacterium leprae (strain Br4923).